The following is a 119-amino-acid chain: Putative transmembrane protein ORF119 (119 aa).

The next 3 helical transmembrane spans lie at 9–29 (TLAIALVFLGISLIFLVPAMV), 73–93 (QYAGIYTLYLSFISFVGSIFT), and 95–115 (PIALIMLILVSLIITLFAFYY).

The protein resides in the host membrane. The sequence is that of Putative transmembrane protein ORF119 from Acidianus convivator (ATV).